The following is a 143-amino-acid chain: Nitrosuccinic acid decarboxylase npaB (143 aa).

The protein belongs to the carboxymuconolactone decarboxylase family. It depends on Mg(2+) as a cofactor.

The protein operates within mycotoxin biosynthesis. Nitrosuccinic acid decarboxylase; part of the gene cluster that mediates the biosynthesis of the deadly neurotoxic nitroalkane 3-nitropropanoic acid (3-NPA) that acts as an antimetabolite of succinate and irreversibly inhibits succinate dehydrogenase and disrupts mitochondrial oxidative phosphorylation. NpaB facilitates decarboxylation of nitrosuccinic acid produced by the nitrosuccinic acid synthase npaA to yield the final product of the cluster, the lethal mycotoxin 3-NPA. This is Nitrosuccinic acid decarboxylase npaB from Metarhizium robertsii (strain ARSEF 23 / ATCC MYA-3075) (Metarhizium anisopliae (strain ARSEF 23)).